We begin with the raw amino-acid sequence, 504 residues long: Ribose import ATP-binding protein RbsA (504 aa).

2 consecutive ABC transporter domains span residues 6 to 242 (LELK…VGRR) and 252 to 495 (VRHG…VGKT). 38–45 (GENGAGKS) is a binding site for ATP.

This sequence belongs to the ABC transporter superfamily. Ribose importer (TC 3.A.1.2.1) family. In terms of assembly, the complex is composed of an ATP-binding protein (RbsA), two transmembrane proteins (RbsC) and a solute-binding protein (RbsB).

It is found in the cell inner membrane. The enzyme catalyses D-ribose(out) + ATP + H2O = D-ribose(in) + ADP + phosphate + H(+). In terms of biological role, part of the ABC transporter complex RbsABC involved in ribose import. Responsible for energy coupling to the transport system. The chain is Ribose import ATP-binding protein RbsA from Photobacterium profundum (strain SS9).